A 261-amino-acid chain; its full sequence is Thiazole synthase (261 aa).

Catalysis depends on lysine 101, which acts as the Schiff-base intermediate with DXP. Residues glycine 162, 188–189 (AG), and 210–211 (NT) each bind 1-deoxy-D-xylulose 5-phosphate.

This sequence belongs to the ThiG family. Homotetramer. Forms heterodimers with either ThiH or ThiS.

The protein localises to the cytoplasm. The catalysed reaction is [ThiS sulfur-carrier protein]-C-terminal-Gly-aminoethanethioate + 2-iminoacetate + 1-deoxy-D-xylulose 5-phosphate = [ThiS sulfur-carrier protein]-C-terminal Gly-Gly + 2-[(2R,5Z)-2-carboxy-4-methylthiazol-5(2H)-ylidene]ethyl phosphate + 2 H2O + H(+). The protein operates within cofactor biosynthesis; thiamine diphosphate biosynthesis. Its function is as follows. Catalyzes the rearrangement of 1-deoxy-D-xylulose 5-phosphate (DXP) to produce the thiazole phosphate moiety of thiamine. Sulfur is provided by the thiocarboxylate moiety of the carrier protein ThiS. In vitro, sulfur can be provided by H(2)S. The sequence is that of Thiazole synthase from Azoarcus sp. (strain BH72).